Reading from the N-terminus, the 429-residue chain is Glutamate-1-semialdehyde 2,1-aminomutase (429 aa).

N6-(pyridoxal phosphate)lysine is present on K265.

Belongs to the class-III pyridoxal-phosphate-dependent aminotransferase family. HemL subfamily. Homodimer. The cofactor is pyridoxal 5'-phosphate.

The protein resides in the cytoplasm. The catalysed reaction is (S)-4-amino-5-oxopentanoate = 5-aminolevulinate. Its pathway is porphyrin-containing compound metabolism; protoporphyrin-IX biosynthesis; 5-aminolevulinate from L-glutamyl-tRNA(Glu): step 2/2. This is Glutamate-1-semialdehyde 2,1-aminomutase from Acidobacterium capsulatum (strain ATCC 51196 / DSM 11244 / BCRC 80197 / JCM 7670 / NBRC 15755 / NCIMB 13165 / 161).